Consider the following 265-residue polypeptide: Energy-coupling factor transporter ATP-binding protein EcfA1 (265 aa).

The ABC transporter domain occupies 2-236 (IKIKNLVFRY…KEIVELAKID (235 aa)). Residue 36-43 (GHNGSGKS) participates in ATP binding.

The protein belongs to the ABC transporter superfamily. Energy-coupling factor EcfA family. In terms of assembly, forms a stable energy-coupling factor (ECF) transporter complex composed of 2 membrane-embedded substrate-binding proteins (S component), 2 ATP-binding proteins (A component) and 2 transmembrane proteins (T component).

The protein resides in the cell membrane. Functionally, ATP-binding (A) component of a common energy-coupling factor (ECF) ABC-transporter complex. Unlike classic ABC transporters this ECF transporter provides the energy necessary to transport a number of different substrates. The protein is Energy-coupling factor transporter ATP-binding protein EcfA1 of Mycoplasmopsis pulmonis (strain UAB CTIP) (Mycoplasma pulmonis).